A 248-amino-acid polypeptide reads, in one-letter code: 3-deoxy-manno-octulosonate cytidylyltransferase (248 aa).

It belongs to the KdsB family.

It is found in the cytoplasm. The enzyme catalyses 3-deoxy-alpha-D-manno-oct-2-ulosonate + CTP = CMP-3-deoxy-beta-D-manno-octulosonate + diphosphate. It functions in the pathway nucleotide-sugar biosynthesis; CMP-3-deoxy-D-manno-octulosonate biosynthesis; CMP-3-deoxy-D-manno-octulosonate from 3-deoxy-D-manno-octulosonate and CTP: step 1/1. Its pathway is bacterial outer membrane biogenesis; lipopolysaccharide biosynthesis. In terms of biological role, activates KDO (a required 8-carbon sugar) for incorporation into bacterial lipopolysaccharide in Gram-negative bacteria. This chain is 3-deoxy-manno-octulosonate cytidylyltransferase, found in Leptospira interrogans serogroup Icterohaemorrhagiae serovar copenhageni (strain Fiocruz L1-130).